The sequence spans 108 residues: U-scoloptoxin(16)-Sm1a (108 aa).

The signal sequence occupies residues 1–19 (MNLFLVLFVFSFSVSQFFA).

This sequence belongs to the scoloptoxin-16 family. In terms of processing, contains 4 disulfide bonds. As to expression, expressed by the venom gland.

It is found in the secreted. In Scolopendra morsitans (Tanzanian blue ringleg centipede), this protein is U-scoloptoxin(16)-Sm1a.